The sequence spans 137 residues: MKLNLYVLTPKRIIWDCEVKEIILSTNSGQIGVLPNHAPINTAVDMGPLRIRLLNDQWLTAVLWSGFARIVNNEIIILGNDAELGSDIDPEEAQKALEIAEANLSKAEGTKDLVEAKLALRRARIRIEAVNWIPPSN.

The protein belongs to the ATPase epsilon chain family. As to quaternary structure, F-type ATPases have 2 components, CF(1) - the catalytic core - and CF(0) - the membrane proton channel. CF(1) has five subunits: alpha(3), beta(3), gamma(1), delta(1), epsilon(1). CF(0) has three main subunits: a, b and c.

The protein localises to the plastid. It is found in the chloroplast thylakoid membrane. Functionally, produces ATP from ADP in the presence of a proton gradient across the membrane. This chain is ATP synthase epsilon chain, chloroplastic, found in Hordeum vulgare (Barley).